The following is a 695-amino-acid chain: MSKDLSKVRNIGISAHIDSGKTTLTERILFYTDRIHAIHEVRGKDGVGAKMDSMELEKERGITIQSAATFCNWKGTDINIIDTPGHVDFTVEVERALRVLDGAVLVLCSVGGVQSQSITVNRQMTRYNVPRIAFINKCDRTGANPAKVTGQLQEKLQLNAHMMQMPIGLEGDLVGMVDLVTMKAVYYEGENGDEIRITDIPAEMLDEATEKRETLLEEISMFSEELMEALLEDSENVDIDLIYKAVRQGTIALEFTPVFMGSAYKNKGVQALLDAVETYLPCPTDVENIGLDLDNEETEFAVTNNDEDPLIMLAFKLEDGRYGQLTYVRTYQGQLTKGDTVYNRRTGRKVKIGRLCRMHSDEMEEIDGVGSGDIVALFGVDCASGDTFTNDAVNCSMTSMHVPEPVISLSIKPIDNKAQINMSKALNRFTKEDPTFRTFVDHETNETIISGMGELHLEVYVERMKREYAAEVEVGKPQVSYRETITQRAEFNYTHKKQTGGTGQFGRVAGYMEPLDEGDYEFVDKIVGGAIPREFISSCDKGFQKSLVKGHLCGAGITGVRCVINDGSFHAVDSSDVAFQIASVGAFKDGYMKAKPVIMEPIMKVSVEGPSEFQGAVMGSINQRRGMIIGSNEEGTYSVIEAEVPLSEMFGYSTTLRSLTQGKAEFTMEFANFKPVPKTVGDNLIKAHEEERKNG.

One can recognise a tr-type G domain in the interval 6–284; it reads SKVRNIGISA…AVETYLPCPT (279 aa). GTP-binding positions include 15–22, 82–86, and 136–139; these read AHIDSGKT, DTPGH, and NKCD.

It belongs to the TRAFAC class translation factor GTPase superfamily. Classic translation factor GTPase family. EF-G/EF-2 subfamily.

It localises to the cytoplasm. Catalyzes the GTP-dependent ribosomal translocation step during translation elongation. During this step, the ribosome changes from the pre-translocational (PRE) to the post-translocational (POST) state as the newly formed A-site-bound peptidyl-tRNA and P-site-bound deacylated tRNA move to the P and E sites, respectively. Catalyzes the coordinated movement of the two tRNA molecules, the mRNA and conformational changes in the ribosome. The polypeptide is Elongation factor G 1 (Desulfotalea psychrophila (strain LSv54 / DSM 12343)).